A 687-amino-acid polypeptide reads, in one-letter code: Phenylalanine aminomutase (L-beta-phenylalanine forming) (687 aa).

The Proton donor/acceptor role is filled by tyrosine 80. The segment at residues 175-177 (ASG) is a cross-link (5-imidazolinone (Ala-Gly)). The residue at position 176 (serine 176) is a 2,3-didehydroalanine (Ser). (E)-cinnamate-binding residues include asparagine 231, glutamine 319, arginine 325, asparagine 355, lysine 427, glutamate 455, and asparagine 458.

The protein belongs to the PAL/histidase family. As to quaternary structure, homodimer. Homotetramer, dimer of dimers. Contains an active site 4-methylidene-imidazol-5-one (MIO), which is formed autocatalytically by cyclization and dehydration of residues Ala-Ser-Gly.

The protein resides in the cytoplasm. The catalysed reaction is L-phenylalanine = L-beta-phenylalanine. It catalyses the reaction L-phenylalanine = (E)-cinnamate + NH4(+). It functions in the pathway alkaloid biosynthesis; taxol biosynthesis. It participates in phenylpropanoid metabolism; trans-cinnamate biosynthesis; trans-cinnamate from L-phenylalanine: step 1/1. In terms of biological role, phenylalanine aminomutase that catalyzes the rearrangement of L-phenylalanine to R-beta-phenylalanine. Catalyzes the first committed step in the biosynthesis of the side chain of the alkaloid taxol (paclitaxel), a widely-used compound with antitumor activity. Also has low phenylalanine ammonia-lyase activity and can catalyze the amination of trans-cinnamate. The protein is Phenylalanine aminomutase (L-beta-phenylalanine forming) (pam) of Taxus chinensis (Chinese yew).